The chain runs to 814 residues: Pre-rRNA-processing protein TSR1 homolog (814 aa).

The segment at 1–67 (MADHAFHRPG…NQMNQLRKNK (67 aa)) is disordered. Basic residues predominate over residues 16–27 (NKAHKTGRHRSK). The Bms1-type G domain maps to 84-249 (APFLVCLLPM…MRRIGGQKKR (166 aa)). Disordered stretches follow at residues 316–357 (PYKL…DAEQ) and 392–448 (WIPD…EEFQ). Basic and acidic residues predominate over residues 317–340 (YKLDKSRDGENSEVRLLDRSDPSK). Residues 395 to 426 (DVEEVEDPDGKDDDDMSEDDDDDKEDDNEDFM) are compositionally biased toward acidic residues. Residues 431 to 442 (KSFEDEYEKRDS) show a composition bias toward basic and acidic residues. Thr-444 is modified (phosphothreonine).

Belongs to the TRAFAC class translation factor GTPase superfamily. Bms1-like GTPase family. TSR1 subfamily.

Its subcellular location is the nucleus. It is found in the nucleolus. In terms of biological role, required during maturation of the 40S ribosomal subunit in the nucleolus. The chain is Pre-rRNA-processing protein TSR1 homolog from Drosophila melanogaster (Fruit fly).